The following is a 130-amino-acid chain: uncharacterized protein (130 aa).

The tract at residues 1–62 (MRMYSSDAHE…ASGVGSSCKR (62 aa)) is disordered. Positions 21–30 (PPHPLPPTGS) are enriched in pro residues.

This is an uncharacterized protein from Homo sapiens (Human).